Here is a 139-residue protein sequence, read N- to C-terminus: ATP synthase epsilon chain (139 aa).

This sequence belongs to the ATPase epsilon chain family. As to quaternary structure, F-type ATPases have 2 components, CF(1) - the catalytic core - and CF(0) - the membrane proton channel. CF(1) has five subunits: alpha(3), beta(3), gamma(1), delta(1), epsilon(1). CF(0) has three main subunits: a, b and c.

The protein localises to the cell inner membrane. Functionally, produces ATP from ADP in the presence of a proton gradient across the membrane. This Shigella boydii serotype 18 (strain CDC 3083-94 / BS512) protein is ATP synthase epsilon chain.